The primary structure comprises 119 residues: Flagellar transcriptional regulator FlhD (119 aa).

Belongs to the FlhD family. Homodimer; disulfide-linked. Forms a heterohexamer composed of two FlhC and four FlhD subunits. Each FlhC binds a FlhD dimer, forming a heterotrimer, and a hexamer assembles by dimerization of two heterotrimers.

The protein localises to the cytoplasm. Functionally, functions in complex with FlhC as a master transcriptional regulator that regulates transcription of several flagellar and non-flagellar operons by binding to their promoter region. Activates expression of class 2 flagellar genes, including fliA, which is a flagellum-specific sigma factor that turns on the class 3 genes. Also regulates genes whose products function in a variety of physiological pathways. The sequence is that of Flagellar transcriptional regulator FlhD from Serratia marcescens.